We begin with the raw amino-acid sequence, 323 residues long: Methionine adenosyltransferase 2 subunit beta (323 aa).

NADP(+)-binding positions include 26 to 29, 49 to 51, 60 to 61, Cys-82, Arg-86, Tyr-146, and Leu-172; these read TGLL, YNR, and NL. The required for interaction with MAT2A stretch occupies residues 308–323; the sequence is LWPFQHDKRWRQTVFH.

Belongs to the dTDP-4-dehydrorhamnose reductase family. MAT2B subfamily. Heterotrimer; composed of a catalytic mat2a homodimer that binds one regulatory mat2b chain. Heterohexamer; composed of a central, catalytic mat2a homotetramer flanked on either side by a regulatory mat2b chain. NADP binding increases the affinity for mat2a.

Its pathway is amino-acid biosynthesis; S-adenosyl-L-methionine biosynthesis; S-adenosyl-L-methionine from L-methionine: step 1/1. In terms of biological role, regulatory subunit of S-adenosylmethionine synthetase 2, an enzyme that catalyzes the formation of S-adenosylmethionine from methionine and ATP. Regulates MAT2A catalytic activity by changing its kinetic properties, increasing its affinity for L-methionine. Can bind NADP (in vitro). The protein is Methionine adenosyltransferase 2 subunit beta (mat2b) of Danio rerio (Zebrafish).